We begin with the raw amino-acid sequence, 477 residues long: Lactate utilization protein B (477 aa).

4Fe-4S ferredoxin-type domains lie at 304–334 (GTEF…GHSY) and 353–382 (YDDY…LHEL). The [4Fe-4S] cluster site is built by C313, C316, C319, C323, C366, C369, and C373. Positions 433-477 (KEDGKITKGPGPLKQWTQIRDFPAPNKSRFRDWFEDRRKEKGEDK) are disordered. A compositionally biased stretch (basic and acidic residues) spans 461-477 (RFRDWFEDRRKEKGEDK).

The protein belongs to the LutB/YkgF family.

Is involved in L-lactate degradation and allows cells to grow with lactate as the sole carbon source. Has probably a role as an electron transporter during oxidation of L-lactate. The chain is Lactate utilization protein B from Bacillus licheniformis (strain ATCC 14580 / DSM 13 / JCM 2505 / CCUG 7422 / NBRC 12200 / NCIMB 9375 / NCTC 10341 / NRRL NRS-1264 / Gibson 46).